Here is a 478-residue protein sequence, read N- to C-terminus: ATP synthase subunit beta (478 aa).

164–171 is a binding site for ATP; that stretch reads GGAGVGKT.

Belongs to the ATPase alpha/beta chains family. In terms of assembly, F-type ATPases have 2 components, CF(1) - the catalytic core - and CF(0) - the membrane proton channel. CF(1) has five subunits: alpha(3), beta(3), gamma(1), delta(1), epsilon(1). CF(0) has three main subunits: a(1), b(2) and c(9-12). The alpha and beta chains form an alternating ring which encloses part of the gamma chain. CF(1) is attached to CF(0) by a central stalk formed by the gamma and epsilon chains, while a peripheral stalk is formed by the delta and b chains.

It is found in the cell membrane. The catalysed reaction is ATP + H2O + 4 H(+)(in) = ADP + phosphate + 5 H(+)(out). In terms of biological role, produces ATP from ADP in the presence of a proton gradient across the membrane. The catalytic sites are hosted primarily by the beta subunits. This chain is ATP synthase subunit beta, found in Streptomyces avermitilis (strain ATCC 31267 / DSM 46492 / JCM 5070 / NBRC 14893 / NCIMB 12804 / NRRL 8165 / MA-4680).